A 130-amino-acid chain; its full sequence is MRGYAWGAASVLLVTLAQLLMKWGMAQIPLMSFADVTLNLFMQYWLPLVVVSGGIFGYALSMLCWFFALHHLPLNRAYPLLSVSYALVYLAAVILPWFNESATLLKTLGTLFILFGVWLINSQAKVKTPQ.

Residues 1 to 4 lie on the Cytoplasmic side of the membrane; it reads MRGY. Residues 5–25 traverse the membrane as a helical segment; it reads AWGAASVLLVTLAQLLMKWGM. The Periplasmic segment spans residues 26-47; it reads AQIPLMSFADVTLNLFMQYWLP. Residues 48–68 form a helical membrane-spanning segment; that stretch reads LVVVSGGIFGYALSMLCWFFA. Residues 69-77 are Cytoplasmic-facing; that stretch reads LHHLPLNRA. Residues 78-98 form a helical membrane-spanning segment; it reads YPLLSVSYALVYLAAVILPWF. Residue Asn-99 is a topological domain, periplasmic. A helical transmembrane segment spans residues 100–120; the sequence is ESATLLKTLGTLFILFGVWLI. At 121–130 the chain is on the cytoplasmic side; sequence NSQAKVKTPQ.

It belongs to the ArnF family. Heterodimer of ArnE and ArnF.

It localises to the cell inner membrane. Its pathway is bacterial outer membrane biogenesis; lipopolysaccharide biosynthesis. Its function is as follows. Translocates 4-amino-4-deoxy-L-arabinose-phosphoundecaprenol (alpha-L-Ara4N-phosphoundecaprenol) from the cytoplasmic to the periplasmic side of the inner membrane. In Serratia proteamaculans (strain 568), this protein is Probable 4-amino-4-deoxy-L-arabinose-phosphoundecaprenol flippase subunit ArnF.